A 483-amino-acid chain; its full sequence is Aspartyl/glutamyl-tRNA(Asn/Gln) amidotransferase subunit B (483 aa).

This sequence belongs to the GatB/GatE family. GatB subfamily. Heterotrimer of A, B and C subunits.

It carries out the reaction L-glutamyl-tRNA(Gln) + L-glutamine + ATP + H2O = L-glutaminyl-tRNA(Gln) + L-glutamate + ADP + phosphate + H(+). The enzyme catalyses L-aspartyl-tRNA(Asn) + L-glutamine + ATP + H2O = L-asparaginyl-tRNA(Asn) + L-glutamate + ADP + phosphate + 2 H(+). Allows the formation of correctly charged Asn-tRNA(Asn) or Gln-tRNA(Gln) through the transamidation of misacylated Asp-tRNA(Asn) or Glu-tRNA(Gln) in organisms which lack either or both of asparaginyl-tRNA or glutaminyl-tRNA synthetases. The reaction takes place in the presence of glutamine and ATP through an activated phospho-Asp-tRNA(Asn) or phospho-Glu-tRNA(Gln). This chain is Aspartyl/glutamyl-tRNA(Asn/Gln) amidotransferase subunit B, found in Granulibacter bethesdensis (strain ATCC BAA-1260 / CGDNIH1).